A 609-amino-acid chain; its full sequence is Replication protein A 70 kDa DNA-binding subunit (609 aa).

Residues 113-163 (GNPQPYNDGQPQPAAPAPASAPAPAPSKLQNNSAPPPSMNRGTSKLFGGGS) are disordered. Residues 125 to 137 (PAAPAPASAPAPA) are compositionally biased toward pro residues. Positions 188-272 (WTVRARVTNK…VKNDYEMTFN (85 aa)) form a DNA-binding region, OB. The C4-type zinc-finger motif lies at 472–494 (CPSQDCNKKVIDQQNGLFRCEKC).

Belongs to the replication factor A protein 1 family. Component of the heterotrimeric canonical replication protein A complex (RPA). Interacts with rpain-a.

The protein resides in the nucleus. It is found in the PML body. As part of the heterotrimeric replication protein A complex (RPA/RP-A), binds and stabilizes single-stranded DNA intermediates, that form during DNA replication or upon DNA stress. It prevents their reannealing and in parallel, recruits and activates different proteins and complexes involved in DNA metabolism. Thereby, it plays an essential role both in DNA replication and the cellular response to DNA damage. The polypeptide is Replication protein A 70 kDa DNA-binding subunit (rpa1) (Xenopus laevis (African clawed frog)).